The primary structure comprises 89 residues: Small ribosomal subunit protein uS15 (89 aa).

This sequence belongs to the universal ribosomal protein uS15 family. In terms of assembly, part of the 30S ribosomal subunit. Forms a bridge to the 50S subunit in the 70S ribosome, contacting the 23S rRNA.

Functionally, one of the primary rRNA binding proteins, it binds directly to 16S rRNA where it helps nucleate assembly of the platform of the 30S subunit by binding and bridging several RNA helices of the 16S rRNA. Its function is as follows. Forms an intersubunit bridge (bridge B4) with the 23S rRNA of the 50S subunit in the ribosome. This Bacillus pumilus (strain SAFR-032) protein is Small ribosomal subunit protein uS15.